Consider the following 310-residue polypeptide: Urease accessory protein UreD (310 aa).

Belongs to the UreD family. As to quaternary structure, ureD, UreF and UreG form a complex that acts as a GTP-hydrolysis-dependent molecular chaperone, activating the urease apoprotein by helping to assemble the nickel containing metallocenter of UreC. The UreE protein probably delivers the nickel.

It localises to the cytoplasm. Functionally, required for maturation of urease via the functional incorporation of the urease nickel metallocenter. The protein is Urease accessory protein UreD of Synechococcus sp. (strain RCC307).